Consider the following 331-residue polypeptide: Glycerophosphodiester phosphodiesterase 1 (331 aa).

Topologically, residues 1–3 (MWL) are cytoplasmic. The chain crosses the membrane as a helical span at residues 4-24 (WEDQGGLLGPFSFLLLVLLLV). Over 25 to 247 (TRSPVNACLL…KPRYDTFWKH (223 aa)) the chain is Lumenal. One can recognise a GP-PDE domain in the interval 65–331 (ISAIAHRGGS…SMVEDCEPHF (267 aa)). Mg(2+) contacts are provided by E97 and D99. An N-linked (GlcNAc...) asparagine glycan is attached at N168. D174 serves as a coordination point for Mg(2+). N198 carries an N-linked (GlcNAc...) asparagine glycan. A helical membrane pass occupies residues 248 to 268 (FIFVMMDILLDWSMHNILWYL). The Cytoplasmic segment spans residues 269–331 (CGISAFLMQK…SMVEDCEPHF (63 aa)).

The protein belongs to the glycerophosphoryl diester phosphodiesterase family. In terms of assembly, interacts with PRAF2. Interacts with RGS16. Mg(2+) serves as cofactor. Post-translationally, N-glycosylated. Widely expressed.

The protein resides in the cell membrane. It is found in the cytoplasmic vesicle membrane. It catalyses the reaction sn-glycero-3-phospho-1D-myo-inositol + H2O = myo-inositol + sn-glycerol 3-phosphate + H(+). The enzyme catalyses 1-O-(1Z-octadecenyl)-sn-glycero-3-phospho-(N-5Z,8Z,11Z,14Z-eicosatetraenoyl)-ethanolamine + H2O = 1-O-(1Z-octadecenyl)-sn-glycero-3-phosphate + N-(5Z,8Z,11Z,14Z-eicosatetraenoyl)-ethanolamine + H(+). The catalysed reaction is 1-O-(1Z-octadecenyl)-sn-glycero-3-phospho-(N-9Z-octadecenoyl)-ethanolamine + H2O = 1-O-(1Z-octadecenyl)-sn-glycero-3-phosphate + N-(9Z-octadecenoyl) ethanolamine + H(+). It carries out the reaction 1-O-(1Z-octadecenyl)-sn-glycero-3-phospho-N-hexadecanoyl-ethanolamine + H2O = 1-O-(1Z-octadecenyl)-sn-glycero-3-phosphate + N-hexadecanoylethanolamine + H(+). It catalyses the reaction N-(4Z,7Z,10Z,13Z,16Z,19Z)-docosahexaenoyl-sn-glycero-3-phosphoethanolamine + H2O = N-(4Z,7Z,10Z,13Z,16Z,19Z)-docosahexaenoyl ethanolamine + sn-glycerol 3-phosphate + H(+). The enzyme catalyses N-eicosanoyl-sn-glycero-3-phosphoethanolamine + H2O = N-eicosanoyl ethanolamine + sn-glycerol 3-phosphate + H(+). The catalysed reaction is N-hexadecanoyl-sn-glycero-3-phosphoethanolamine + H2O = N-hexadecanoylethanolamine + sn-glycerol 3-phosphate + H(+). It carries out the reaction N-(9Z-octadecenoyl)-sn-glycero-3-phosphoethanolamine + H2O = N-(9Z-octadecenoyl) ethanolamine + sn-glycerol 3-phosphate + H(+). It catalyses the reaction N-(5Z,8Z,11Z,14Z-eicosatetraenoyl)-sn-glycero-3-phosphoethanolamine + H2O = N-(5Z,8Z,11Z,14Z-eicosatetraenoyl)-ethanolamine + sn-glycerol 3-phosphate + H(+). Inhibited by EDTA, calcium chloride, and zinc chloride. Enhanced by magnesium chloride. Glycerophosphodiester phosphodiesterase activity can be modulated by G-protein signaling pathways. In terms of biological role, hydrolyzes the phosphodiester bond of glycerophosphodiesters such as glycerophosphoinositol (GroPIns) and glycerophosphoethanolamine (GroPEth), to yield a glycerol phosphate and an alcohol. Hydrolyzes glycerophospho-N-acylethanolamines to N-acylethanolamines in the brain and participates in bioactive N-acylethanolamine biosynthesis such as anandamide (an endocannabinoid), N-palmitoylethanolamine (an anti-inflammatory), and N-oleoylethanolamine (an anorexic). In addition, has a lysophospholipase D activity by hydrolyzing N-acyl-lysoplasmenylethanolamine (N-acyl-lysoPlsEt) to N-acylethanolamine. However lysophospholipase D activity is lower than glycerophosphodiester phosphodiesterase activity. Has little or no activity towards glycerophosphocholine. The sequence is that of Glycerophosphodiester phosphodiesterase 1 from Homo sapiens (Human).